Reading from the N-terminus, the 126-residue chain is Small ribosomal subunit protein bS6 (126 aa).

A disordered region spans residues 104 to 126; it reads LARRDRGDRPERPREDFGAQAQA. Positions 105–120 are enriched in basic and acidic residues; that stretch reads ARRDRGDRPERPREDF.

The protein belongs to the bacterial ribosomal protein bS6 family.

Functionally, binds together with bS18 to 16S ribosomal RNA. This chain is Small ribosomal subunit protein bS6, found in Caulobacter vibrioides (strain ATCC 19089 / CIP 103742 / CB 15) (Caulobacter crescentus).